The sequence spans 221 residues: MEAGGFLDSLIYGACVVFTLGMFSAGLSDLRHMRMTRSVDNVQFLPFLTTEVNNLGWLSYGALKGDGILIVVNTVGAALQTLYILAYLHYCPRKRVVLLQTATLLGVLLLGYGYFWLLVPNPEARLQQLGLFCSVFTISMYLSPLADLAKVIQTKSTQCLSYPLTIATLLTSASWCLYGFRLRDPYIMVSNFPGIVTSFIRFWLFWKYPQEQDRNYWLLQT.

7 helical membrane passes run Ala-3 to Phe-23, Val-42 to Ala-62, Ile-68 to Leu-88, Val-96 to Trp-116, Leu-129 to Ala-149, Leu-160 to Phe-180, and Tyr-186 to Trp-206. The region spanning Leu-10–Lys-94 is the MtN3/slv 1 domain. In terms of domain architecture, MtN3/slv 2 spans Gln-127–Gln-212. A mediates interaction with TRPV2 region spans residues Ala-149–Thr-221.

Belongs to the SWEET sugar transporter family. In terms of assembly, interacts with TRPV2; the interaction probably occurs intracellularly and depends on TRPV2 N-glycosylation. As to expression, ubiquitously expressed with highest expression in oviduct, epididymis and intestine.

The protein resides in the golgi apparatus membrane. The protein localises to the cell membrane. In terms of biological role, mediates sugar transport across membranes. May stimulate V(D)J recombination by the activation of RAG1. The polypeptide is Sugar transporter SWEET1 (SLC50A1) (Homo sapiens (Human)).